The sequence spans 402 residues: Serine/threonine transporter SstT (402 aa).

The next 8 membrane-spanning stretches (helical) occupy residues 17–37 (IAIG…ITVI), 44–64 (FVGG…ANAL), 78–98 (IIVL…ISHY), 138–158 (ALSQ…GFAM), 179–199 (IVRW…FDTI), 212–232 (VLIL…NPII), 295–315 (MAGA…TLGI), and 336–356 (ASGI…LFGI).

The protein belongs to the dicarboxylate/amino acid:cation symporter (DAACS) (TC 2.A.23) family.

The protein resides in the cell membrane. The enzyme catalyses L-serine(in) + Na(+)(in) = L-serine(out) + Na(+)(out). The catalysed reaction is L-threonine(in) + Na(+)(in) = L-threonine(out) + Na(+)(out). Its function is as follows. Involved in the import of serine and threonine into the cell, with the concomitant import of sodium (symport system). The polypeptide is Serine/threonine transporter SstT (Streptococcus thermophilus (strain ATCC BAA-250 / LMG 18311)).